Reading from the N-terminus, the 328-residue chain is Mitochondrial thiamine pyrophosphate carrier 1 (328 aa).

Solcar repeat units follow at residues 12–110 (GTRR…TTQL), 120–208 (PQPI…LRPV), and 221–316 (PPGS…ALKL). 6 helical membrane passes run 17 to 37 (VVLA…PLDV), 79 to 99 (LTGL…YGGI), 126 to 146 (FISG…LDLL), 185 to 205 (SAAV…YEAL), 227 to 247 (AAAG…LDLV), and 291 to 308 (GLTV…VTMW).

Belongs to the mitochondrial carrier (TC 2.A.29) family.

The protein resides in the mitochondrion inner membrane. Its function is as follows. Mitochondrial transporter that mediates uptake of thiamine pyrophosphate (ThPP) into mitochondria. This chain is Mitochondrial thiamine pyrophosphate carrier 1 (tpc1), found in Emericella nidulans (strain FGSC A4 / ATCC 38163 / CBS 112.46 / NRRL 194 / M139) (Aspergillus nidulans).